The following is a 284-amino-acid chain: Protein phosphatase 1 regulatory subunit 3B (284 aa).

Residues Arg-61–Phe-64 carry the PP1-binding motif motif. In terms of domain architecture, CBM21 spans Arg-124–Thr-232. Phosphoserine is present on Ser-260.

Interacts with glycogen, PPP1CC catalytic subunit of PP1 and PYGL. Associates with glycogen particles. Forms complexes with debranching enzyme, glycogen phosphorylase, glycogen synthase and phosphorylase kinase which is necessary for its regulation of PP1 activity. As to expression, highly expressed in liver. Moderately expressed in kidney, heart, testis, spleen and lung. Weakly expressed in skeletal muscle (at protein level). Expressed predominantly in liver. Expressed moderately in heart. Expressed weakly in lung, kidney, spleen and skeletal muscle.

Functionally, acts as a glycogen-targeting subunit for phosphatase PP1. Facilitates interaction of the PP1 with enzymes of the glycogen metabolism and regulates its activity. Suppresses the rate at which PP1 dephosphorylates (inactivates) glycogen phosphorylase and enhances the rate at which it activates glycogen synthase and therefore limits glycogen breakdown. Its activity is inhibited by PYGL, resulting in inhibition of the glycogen synthase and glycogen phosphorylase phosphatase activities of PP1. Dramatically increases basal and insulin-stimulated glycogen synthesis upon overexpression in hepatocytes. The sequence is that of Protein phosphatase 1 regulatory subunit 3B (Ppp1r3b) from Rattus norvegicus (Rat).